The sequence spans 702 residues: Ribosomal RNA large subunit methyltransferase K/L (702 aa).

In terms of domain architecture, THUMP spans 43–154 (LVYQSLMWSR…KETASIALDL (112 aa)).

This sequence belongs to the methyltransferase superfamily. RlmKL family.

Its subcellular location is the cytoplasm. The enzyme catalyses guanosine(2445) in 23S rRNA + S-adenosyl-L-methionine = N(2)-methylguanosine(2445) in 23S rRNA + S-adenosyl-L-homocysteine + H(+). It carries out the reaction guanosine(2069) in 23S rRNA + S-adenosyl-L-methionine = N(2)-methylguanosine(2069) in 23S rRNA + S-adenosyl-L-homocysteine + H(+). Specifically methylates the guanine in position 2445 (m2G2445) and the guanine in position 2069 (m7G2069) of 23S rRNA. The chain is Ribosomal RNA large subunit methyltransferase K/L from Escherichia coli O1:K1 / APEC.